A 610-amino-acid chain; its full sequence is Glutamine--fructose-6-phosphate aminotransferase [isomerizing] (610 aa).

The active-site Nucleophile; for GATase activity is Cys-2. The region spanning 2-218 is the Glutamine amidotransferase type-2 domain; it reads CGIVGAVAQR…EGDIAEITRR (217 aa). SIS domains follow at residues 278–426 and 459–600; these read IVDS…VKGH and LAED…VDQP. Lys-605 (for Fru-6P isomerization activity) is an active-site residue.

As to quaternary structure, homodimer.

It is found in the cytoplasm. It carries out the reaction D-fructose 6-phosphate + L-glutamine = D-glucosamine 6-phosphate + L-glutamate. Functionally, catalyzes the first step in hexosamine metabolism, converting fructose-6P into glucosamine-6P using glutamine as a nitrogen source. In Haemophilus influenzae (strain ATCC 51907 / DSM 11121 / KW20 / Rd), this protein is Glutamine--fructose-6-phosphate aminotransferase [isomerizing].